Here is a 299-residue protein sequence, read N- to C-terminus: MKKLQYIDRSTNQRVTEVVCYEKTMMFLYTSRLGKGVSTLLSRTPFLSRLYGWIQKRSWTRKKIPGFIKKNRICTKEFKKSISEFTSFNDFFTRELRPEARPIARGDDICVTPVDGAYLIYPNIAEFGEFVVKSKRFSLSKLLGDAKLVEKYASGSVVFARLALFDYHRFHFPVDCLAGPTRNINGYLFSVHPMALKDNFNIFCENKRTLTELKTEKFGDVLYLEVGALNVGSIVQTYTAEKKYSKGNEKGFFEIGGSTVIVLFEPGVIQFDADLLKNSRMGLETRCLMGQSLGRSLRE.

Catalysis depends on charge relay system; for autoendoproteolytic cleavage activity residues D115, H171, and S258. S258 functions as the Schiff-base intermediate with substrate; via pyruvic acid; for decarboxylase activity in the catalytic mechanism. Position 258 is a pyruvic acid (Ser); by autocatalysis (S258).

The protein belongs to the phosphatidylserine decarboxylase family. PSD-B subfamily. Prokaryotic type II sub-subfamily. In terms of assembly, heterodimer of a large membrane-associated beta subunit and a small pyruvoyl-containing alpha subunit. Requires pyruvate as cofactor. Is synthesized initially as an inactive proenzyme. Formation of the active enzyme involves a self-maturation process in which the active site pyruvoyl group is generated from an internal serine residue via an autocatalytic post-translational modification. Two non-identical subunits are generated from the proenzyme in this reaction, and the pyruvate is formed at the N-terminus of the alpha chain, which is derived from the carboxyl end of the proenzyme. The autoendoproteolytic cleavage occurs by a canonical serine protease mechanism, in which the side chain hydroxyl group of the serine supplies its oxygen atom to form the C-terminus of the beta chain, while the remainder of the serine residue undergoes an oxidative deamination to produce ammonia and the pyruvoyl prosthetic group on the alpha chain. During this reaction, the Ser that is part of the protease active site of the proenzyme becomes the pyruvoyl prosthetic group, which constitutes an essential element of the active site of the mature decarboxylase.

It is found in the cell membrane. The enzyme catalyses a 1,2-diacyl-sn-glycero-3-phospho-L-serine + H(+) = a 1,2-diacyl-sn-glycero-3-phosphoethanolamine + CO2. Its pathway is phospholipid metabolism; phosphatidylethanolamine biosynthesis; phosphatidylethanolamine from CDP-diacylglycerol: step 2/2. Functionally, catalyzes the formation of phosphatidylethanolamine (PtdEtn) from phosphatidylserine (PtdSer). The sequence is that of Phosphatidylserine decarboxylase proenzyme from Chlamydia caviae (strain ATCC VR-813 / DSM 19441 / 03DC25 / GPIC) (Chlamydophila caviae).